The sequence spans 415 residues: Glucose-1-phosphate adenylyltransferase (415 aa).

Alpha-D-glucose 1-phosphate contacts are provided by residues Y98, G163, 178 to 179 (EK), and S189.

It belongs to the bacterial/plant glucose-1-phosphate adenylyltransferase family. In terms of assembly, homotetramer.

The catalysed reaction is alpha-D-glucose 1-phosphate + ATP + H(+) = ADP-alpha-D-glucose + diphosphate. It functions in the pathway glycan biosynthesis; glycogen biosynthesis. Its function is as follows. Involved in the biosynthesis of ADP-glucose, a building block required for the elongation reactions to produce glycogen. Catalyzes the reaction between ATP and alpha-D-glucose 1-phosphate (G1P) to produce pyrophosphate and ADP-Glc. The chain is Glucose-1-phosphate adenylyltransferase from Fervidobacterium nodosum (strain ATCC 35602 / DSM 5306 / Rt17-B1).